The chain runs to 364 residues: Homeobox protein Nkx-6.1 (364 aa).

A disordered region spans residues 35–134 (LYPATYPPLP…SSSSSASATS (100 aa)). 2 stretches are compositionally biased toward low complexity: residues 48-92 (PSSS…LSAA) and 109-134 (ASGA…SATS). Residues 101–268 (LSRPSMPVAS…KYLAGPERAR (168 aa)) form a repressor domain region. An Asymmetric dimethylarginine modification is found at Arg-189. The homeobox DNA-binding region spans 236–295 (RKHTRPTFSGQQIFALEKTFEQTKYLAGPERARLAYSLGMTESQVKVWFQNRRTKWRKKH). The segment at 294 to 364 (KHAAEMATAK…LHASEAEGSS (71 aa)) is disordered. Residues 304 to 317 (KKQDSETERLKGTS) are compositionally biased toward basic and acidic residues. An involved in DNA-binding region spans residues 306–364 (QDSETERLKGTSENEEEDDDYNKPLDPNSDDEKITQLLKKHKSSSGGLLLHASEAEGSS).

In terms of tissue distribution, pancreatic beta cells.

It is found in the nucleus. Its function is as follows. Together with NKX2-2 and IRX3 acts to restrict the generation of motor neurons to the appropriate region of the neural tube. Belongs to the class II proteins of neuronal progenitor factors, which are induced by SHH signals. Transcription factor which binds to specific A/T-rich DNA sequences in the promoter regions of a number of genes. Involved in transcriptional regulation in islet beta cells. Binds to the insulin promoter and is involved in regulation of the insulin gene. The protein is Homeobox protein Nkx-6.1 (NKX6-1) of Mesocricetus auratus (Golden hamster).